The primary structure comprises 345 residues: NADPH-dependent oxidoreductase 2-alkenal reductase (345 aa).

NADP(+) contacts are provided by residues 52–53, 163–169, G188, K192, Y208, N232, C254, Y260, 284–286, F330, and 334–336; these read PY, AASGAVG, FVV, and NVG. A substrate-binding site is contributed by Y53. Residue Y260 participates in substrate binding.

This sequence belongs to the NADP-dependent oxidoreductase L4BD family. Homodimer. Expressed in leaves.

It localises to the cytoplasm. It is found in the nucleus. Its subcellular location is the nucleoplasm. It carries out the reaction an n-alkanal + NAD(+) = an alk-2-enal + NADH + H(+). It catalyses the reaction an n-alkanal + NADP(+) = an alk-2-enal + NADPH + H(+). Its activity is regulated as follows. Inhibited by N-ethylmaleimide and p-chloromercuribenzoic acid. In terms of biological role, involved in the detoxification of reactive carbonyls. Acts on lipid peroxide-derived reactive aldehydes. Specific to a double bond activated by an adjacent carbonyl group. Can use both quinones and diamide as substrates, but not menadione, ferricyanide or phylloquinone. Can use 4-hydroxy-(2E)-nonenal (HNE), 4-hydroxy-(2E)-hexenal (HHE), (2E)-nonenal, (2E)-hexenal, (2E)-pentenal, propenal (acrolein), 3-buten-2-one and 3-penten-2-one, but not (R)-(-)-carvone, n-nonanal, n-hexanal, (3Z)-hexanal, cyclohex-2-en-1-one or 12-oxo phytodienoic acid (OPDA) as electron acceptors. Catalyzes the reduction of the alpha,beta-unsaturated bond of 2-alkenals, of lipid peroxide-derived oxenes 9-oxo-10(E),12(Z)-octadecadienoic acid (9-KODE) and 13-oxo-9(Z),11(E)-octadecadienoic acid (13-KODE), as well as 4-oxo-(2E)-nonenal and 4-hydroxynonenal. Can use 12-oxo-10(E) dodecanoate (traumatin), trans-1,3 diphenyl-2-propenone, trans-1,4-diphenyl-2-butene-1,4-dione, 9-oxo-12,13-epoxy-(10E)-octadecenoic acid (trans-EKODE-1b) and 9,13-dihydroxy-10-oxo-11-octadecenoic acid as substrates. Catalyzes the reduction of the 7-8 double bond of phenylpropanal substrates, such as p-coumaryl aldehyde and coniferyl aldehyde (in vitro). Has activity towards toxic substrates, such as 4-hydroxy-(2E)-nonenal (in vitro). May play a distinct role in plant antioxidant defense and is possibly involved in NAD(P)/NAD(P)H homeostasis. This is NADPH-dependent oxidoreductase 2-alkenal reductase from Arabidopsis thaliana (Mouse-ear cress).